The sequence spans 483 residues: Cobyric acid synthase (483 aa).

The region spanning 248 to 434 (ALRVVVPVLP…LHGLFEQPSA (187 aa)) is the GATase cobBQ-type domain. The active-site Nucleophile is the Cys329. The active site involves His426.

It belongs to the CobB/CobQ family. CobQ subfamily.

It participates in cofactor biosynthesis; adenosylcobalamin biosynthesis. Catalyzes amidations at positions B, D, E, and G on adenosylcobyrinic A,C-diamide. NH(2) groups are provided by glutamine, and one molecule of ATP is hydrogenolyzed for each amidation. This Ectopseudomonas mendocina (strain ymp) (Pseudomonas mendocina) protein is Cobyric acid synthase.